Here is a 409-residue protein sequence, read N- to C-terminus: L-cysteine:1D-myo-inositol 2-amino-2-deoxy-alpha-D-glucopyranoside ligase (409 aa).

Cys43 is a Zn(2+) binding site. L-cysteinyl-5'-AMP is bound by residues 43–46 (CGIT), Thr58, and 81–83 (NVT). The 'HIGH' region motif lies at 45 to 55 (ITPYDATHMGH). Positions 183 to 188 (ERGGDP) match the 'ERGGDP' region motif. Position 224 (Trp224) interacts with L-cysteinyl-5'-AMP. Cys228 serves as a coordination point for Zn(2+). Position 246 to 248 (246 to 248 (GSD)) interacts with L-cysteinyl-5'-AMP. His253 contributes to the Zn(2+) binding site. Val280 is a binding site for L-cysteinyl-5'-AMP. Residues 286–290 (KMSKS) carry the 'KMSKS' region motif.

Belongs to the class-I aminoacyl-tRNA synthetase family. MshC subfamily. Monomer. The cofactor is Zn(2+).

The enzyme catalyses 1D-myo-inositol 2-amino-2-deoxy-alpha-D-glucopyranoside + L-cysteine + ATP = 1D-myo-inositol 2-(L-cysteinylamino)-2-deoxy-alpha-D-glucopyranoside + AMP + diphosphate + H(+). In terms of biological role, catalyzes the ATP-dependent condensation of GlcN-Ins and L-cysteine to form L-Cys-GlcN-Ins. In Streptomyces scabiei (strain 87.22), this protein is L-cysteine:1D-myo-inositol 2-amino-2-deoxy-alpha-D-glucopyranoside ligase.